Reading from the N-terminus, the 845-residue chain is Meiotically up-regulated gene 4 protein (845 aa).

The disordered stretch occupies residues 122–158 (LSTTDEQPKEPSIISISSSSSDPSSSPPPSSSLLKTP). A compositionally biased stretch (low complexity) spans 132 to 145 (PSIISISSSSSDPS). The helical transmembrane segment at 726-746 (FLVFLTFTGMTLFILYQLTFP) threads the bilayer.

It is found in the membrane. Its function is as follows. Has a role in meiosis. The polypeptide is Meiotically up-regulated gene 4 protein (mug4) (Schizosaccharomyces pombe (strain 972 / ATCC 24843) (Fission yeast)).